A 232-amino-acid polypeptide reads, in one-letter code: MDAVAAEPVVAPVLPLPAQVRDLGMQDYAPVWRAMQRFTDTRDEHTGDELWVVEHTPVFTLGQAGKPEHVLAPGEIPVLQVDRGGQVTYHGPGQLVVYPLLDLRRLKIGVRDYVCKIEQALIDTLDEWNIVAERRDGAPGVYVGGAKIAALGIRVRRGCTFHGLSFNVAMDLEPFHRINPCGYQDLQVTSVLDLGGPSGMDAVKAVLLDQLARQFGLVLQPTSALPDLSLPA.

In terms of domain architecture, BPL/LPL catalytic spans Glu44–Leu219. Residues Arg83–His90, Ala150–Gly152, and Gly163–Ser165 each bind substrate. Cys181 (acyl-thioester intermediate) is an active-site residue.

This sequence belongs to the LipB family.

The protein resides in the cytoplasm. It catalyses the reaction octanoyl-[ACP] + L-lysyl-[protein] = N(6)-octanoyl-L-lysyl-[protein] + holo-[ACP] + H(+). It functions in the pathway protein modification; protein lipoylation via endogenous pathway; protein N(6)-(lipoyl)lysine from octanoyl-[acyl-carrier-protein]: step 1/2. Catalyzes the transfer of endogenously produced octanoic acid from octanoyl-acyl-carrier-protein onto the lipoyl domains of lipoate-dependent enzymes. Lipoyl-ACP can also act as a substrate although octanoyl-ACP is likely to be the physiological substrate. The polypeptide is Octanoyltransferase (Xanthomonas campestris pv. campestris (strain 8004)).